A 1024-amino-acid polypeptide reads, in one-letter code: Beta-galactosidase (1024 aa).

Residues asparagine 103 and aspartate 202 each contribute to the substrate site. Aspartate 202 contacts Na(+). 3 residues coordinate Mg(2+): glutamate 417, histidine 419, and glutamate 462. Substrate contacts are provided by residues glutamate 462 and 538–541 (EYAH). The Proton donor role is filled by glutamate 462. Glutamate 538 functions as the Nucleophile in the catalytic mechanism. Asparagine 598 lines the Mg(2+) pocket. Residues phenylalanine 602 and asparagine 605 each contribute to the Na(+) site. Substrate contacts are provided by asparagine 605 and tryptophan 1000.

It belongs to the glycosyl hydrolase 2 family. As to quaternary structure, homotetramer. It depends on Mg(2+) as a cofactor. Requires Na(+) as cofactor.

The catalysed reaction is Hydrolysis of terminal non-reducing beta-D-galactose residues in beta-D-galactosides.. This is Beta-galactosidase from Escherichia coli (strain SMS-3-5 / SECEC).